We begin with the raw amino-acid sequence, 58 residues long: uncharacterized protein (58 aa).

It is found in the plastid. It localises to the chloroplast. This is an uncharacterized protein from Chlamydomonas reinhardtii (Chlamydomonas smithii).